Here is a 372-residue protein sequence, read N- to C-terminus: Histidinol-phosphate aminotransferase (372 aa).

Lysine 234 carries the post-translational modification N6-(pyridoxal phosphate)lysine.

It belongs to the class-II pyridoxal-phosphate-dependent aminotransferase family. Histidinol-phosphate aminotransferase subfamily. In terms of assembly, homodimer. It depends on pyridoxal 5'-phosphate as a cofactor.

The enzyme catalyses L-histidinol phosphate + 2-oxoglutarate = 3-(imidazol-4-yl)-2-oxopropyl phosphate + L-glutamate. It functions in the pathway amino-acid biosynthesis; L-histidine biosynthesis; L-histidine from 5-phospho-alpha-D-ribose 1-diphosphate: step 7/9. This chain is Histidinol-phosphate aminotransferase (hisC), found in Corynebacterium efficiens (strain DSM 44549 / YS-314 / AJ 12310 / JCM 11189 / NBRC 100395).